Consider the following 153-residue polypeptide: Cytochrome c-type biogenesis protein CcmE (153 aa).

Residues 1 to 7 lie on the Cytoplasmic side of the membrane; the sequence is MTRKKRR. The chain crosses the membrane as a helical; Signal-anchor for type II membrane protein span at residues 8-28; that stretch reads LYFVVLGMLALFAAAGLTLTA. Residues 29–153 are Periplasmic-facing; that stretch reads FQDNLVFFYS…PPTAAAAPAP (125 aa). 2 residues coordinate heme: histidine 121 and tyrosine 125. Residues 132–153 are disordered; the sequence is ESLKASGKWQHGPPTAAAAPAP. The segment covering 144-153 has biased composition (low complexity); that stretch reads PPTAAAAPAP.

The protein belongs to the CcmE/CycJ family.

The protein resides in the cell inner membrane. Heme chaperone required for the biogenesis of c-type cytochromes. Transiently binds heme delivered by CcmC and transfers the heme to apo-cytochromes in a process facilitated by CcmF and CcmH. In Rhodospirillum rubrum (strain ATCC 11170 / ATH 1.1.1 / DSM 467 / LMG 4362 / NCIMB 8255 / S1), this protein is Cytochrome c-type biogenesis protein CcmE.